We begin with the raw amino-acid sequence, 491 residues long: Probable glycine dehydrogenase (decarboxylating) subunit 2 (491 aa).

The residue at position 273 (K273) is an N6-(pyridoxal phosphate)lysine.

Belongs to the GcvP family. C-terminal subunit subfamily. The glycine cleavage system is composed of four proteins: P, T, L and H. In this organism, the P 'protein' is a heterodimer of two subunits. Pyridoxal 5'-phosphate serves as cofactor.

It carries out the reaction N(6)-[(R)-lipoyl]-L-lysyl-[glycine-cleavage complex H protein] + glycine + H(+) = N(6)-[(R)-S(8)-aminomethyldihydrolipoyl]-L-lysyl-[glycine-cleavage complex H protein] + CO2. Functionally, the glycine cleavage system catalyzes the degradation of glycine. The P protein binds the alpha-amino group of glycine through its pyridoxal phosphate cofactor; CO(2) is released and the remaining methylamine moiety is then transferred to the lipoamide cofactor of the H protein. The sequence is that of Probable glycine dehydrogenase (decarboxylating) subunit 2 from Bacillus anthracis (strain A0248).